A 292-amino-acid polypeptide reads, in one-letter code: Syntenin-2 (292 aa).

2 PDZ domains span residues 108-187 (EIHL…IRDR) and 192-267 (TVTM…IPTV).

Monomer and homodimer. Interacts with SDCBP. Interacts with TM4SF1.

Its subcellular location is the cytoplasm. The protein resides in the nucleus. It is found in the nucleolus. It localises to the nucleoplasm. The protein localises to the cell membrane. Its subcellular location is the nucleus speckle. In terms of biological role, binds phosphatidylinositol 4,5-bisphosphate (PIP2). May play a role in the organization of nuclear PIP2, cell division and cell survival. This is Syntenin-2 (Sdcbp2) from Mus musculus (Mouse).